A 771-amino-acid chain; its full sequence is Probable exo-1,4-beta-xylosidase bxlB (771 aa).

The N-terminal stretch at 1–25 (MAHITSWHYGNAIALLVSLAPGALS) is a signal peptide. N-linked (GlcNAc...) asparagine glycosylation occurs at Asn-67. Residue Asp-293 is part of the active site. Residues Asn-305, Asn-345, Asn-423, and Asn-464 are each glycosylated (N-linked (GlcNAc...) asparagine).

The protein belongs to the glycosyl hydrolase 3 family.

It localises to the secreted. The catalysed reaction is Hydrolysis of (1-&gt;4)-beta-D-xylans, to remove successive D-xylose residues from the non-reducing termini.. Its pathway is glycan degradation; xylan degradation. Functionally, xylan 1,4-beta-xylosidase involved in the hydrolysis of xylan, a major structural heterogeneous polysaccharide found in plant biomass representing the second most abundant polysaccharide in the biosphere, after cellulose. The chain is Probable exo-1,4-beta-xylosidase bxlB (bxlB) from Aspergillus fumigatus (strain CBS 144.89 / FGSC A1163 / CEA10) (Neosartorya fumigata).